The chain runs to 231 residues: Flagellar L-ring protein (231 aa).

An N-terminal signal peptide occupies residues 1-18; it reads MNRLMIVSLLGIATALGG. A lipid anchor (N-palmitoyl cysteine) is attached at Cys19. Cys19 carries the S-diacylglycerol cysteine lipid modification. Residues 118 to 141 form a disordered region; it reads LSLSAEYGGSRDAKGDSQAGQSNS.

It belongs to the FlgH family. As to quaternary structure, the basal body constitutes a major portion of the flagellar organelle and consists of four rings (L,P,S, and M) mounted on a central rod.

It localises to the cell outer membrane. The protein localises to the bacterial flagellum basal body. Assembles around the rod to form the L-ring and probably protects the motor/basal body from shearing forces during rotation. The chain is Flagellar L-ring protein from Pseudomonas aeruginosa (strain LESB58).